The sequence spans 140 residues: ATP synthase epsilon chain (140 aa).

This sequence belongs to the ATPase epsilon chain family. In terms of assembly, F-type ATPases have 2 components, CF(1) - the catalytic core - and CF(0) - the membrane proton channel. CF(1) has five subunits: alpha(3), beta(3), gamma(1), delta(1), epsilon(1). CF(0) has three main subunits: a, b and c.

It is found in the cell inner membrane. Its function is as follows. Produces ATP from ADP in the presence of a proton gradient across the membrane. The protein is ATP synthase epsilon chain of Saccharophagus degradans (strain 2-40 / ATCC 43961 / DSM 17024).